Here is a 64-residue protein sequence, read N- to C-terminus: MAHPSQLGFQDAASPMMEELLHFHDHALMVVFLISTFVLYIILTMLTTKLTDKLILESHEIEII.

At Met1 to Ser14 the chain is on the mitochondrial intermembrane side. The helical transmembrane segment at Pro15 to Met45 threads the bilayer. Residues Leu46–Ile64 are Mitochondrial matrix-facing.

Belongs to the cytochrome c oxidase subunit 2 family. Component of the cytochrome c oxidase (complex IV, CIV), a multisubunit enzyme composed of 14 subunits. The complex is composed of a catalytic core of 3 subunits MT-CO1, MT-CO2 and MT-CO3, encoded in the mitochondrial DNA, and 11 supernumerary subunits COX4I, COX5A, COX5B, COX6A, COX6B, COX6C, COX7A, COX7B, COX7C, COX8 and NDUFA4, which are encoded in the nuclear genome. The complex exists as a monomer or a dimer and forms supercomplexes (SCs) in the inner mitochondrial membrane with NADH-ubiquinone oxidoreductase (complex I, CI) and ubiquinol-cytochrome c oxidoreductase (cytochrome b-c1 complex, complex III, CIII), resulting in different assemblies (supercomplex SCI(1)III(2)IV(1) and megacomplex MCI(2)III(2)IV(2)). Found in a complex with TMEM177, COA6, COX18, COX20, SCO1 and SCO2. Interacts with TMEM177 in a COX20-dependent manner. Interacts with COX20. Interacts with COX16. Cu cation is required as a cofactor.

The protein localises to the mitochondrion inner membrane. It catalyses the reaction 4 Fe(II)-[cytochrome c] + O2 + 8 H(+)(in) = 4 Fe(III)-[cytochrome c] + 2 H2O + 4 H(+)(out). Component of the cytochrome c oxidase, the last enzyme in the mitochondrial electron transport chain which drives oxidative phosphorylation. The respiratory chain contains 3 multisubunit complexes succinate dehydrogenase (complex II, CII), ubiquinol-cytochrome c oxidoreductase (cytochrome b-c1 complex, complex III, CIII) and cytochrome c oxidase (complex IV, CIV), that cooperate to transfer electrons derived from NADH and succinate to molecular oxygen, creating an electrochemical gradient over the inner membrane that drives transmembrane transport and the ATP synthase. Cytochrome c oxidase is the component of the respiratory chain that catalyzes the reduction of oxygen to water. Electrons originating from reduced cytochrome c in the intermembrane space (IMS) are transferred via the dinuclear copper A center (CU(A)) of subunit 2 and heme A of subunit 1 to the active site in subunit 1, a binuclear center (BNC) formed by heme A3 and copper B (CU(B)). The BNC reduces molecular oxygen to 2 water molecules using 4 electrons from cytochrome c in the IMS and 4 protons from the mitochondrial matrix. In Geophagus steindachneri (Red hump earth eater), this protein is Cytochrome c oxidase subunit 2 (mt-co2).